Consider the following 172-residue polypeptide: Methylated-DNA--protein-cysteine methyltransferase (172 aa).

Cys142 (nucleophile; methyl group acceptor) is an active-site residue.

Belongs to the MGMT family.

It is found in the cytoplasm. It carries out the reaction a 6-O-methyl-2'-deoxyguanosine in DNA + L-cysteinyl-[protein] = S-methyl-L-cysteinyl-[protein] + a 2'-deoxyguanosine in DNA. It catalyses the reaction a 4-O-methyl-thymidine in DNA + L-cysteinyl-[protein] = a thymidine in DNA + S-methyl-L-cysteinyl-[protein]. Involved in the cellular defense against the biological effects of O6-methylguanine (O6-MeG) and O4-methylthymine (O4-MeT) in DNA. Repairs the methylated nucleobase in DNA by stoichiometrically transferring the methyl group to a cysteine residue in the enzyme. This is a suicide reaction: the enzyme is irreversibly inactivated. This chain is Methylated-DNA--protein-cysteine methyltransferase, found in Pyrococcus horikoshii (strain ATCC 700860 / DSM 12428 / JCM 9974 / NBRC 100139 / OT-3).